The sequence spans 115 residues: Envelope glycoprotein N (115 aa).

The first 27 residues, 1–27, serve as a signal peptide directing secretion; the sequence is MWLLRPAGSNFIVALIVLACAGPLTCS. Residues 28-77 are Virion surface-facing; that stretch reads AQLDAGILNPWGSAGHNDAVMPGMFANSESDERFYSPHCSSRGLPLVNES. A helical membrane pass occupies residues 78–98; that stretch reads MASVIFFLSLAMVCVAIVAIL. Residues 99–115 lie on the Intravirion side of the membrane; the sequence is YNCCFNSFKNSVINSRW.

The protein belongs to the herpesviridae glycoprotein N family. As to quaternary structure, interacts (via N-terminus) with gM (via N-terminus). The gM-gN heterodimer forms the gCII complex.

Its subcellular location is the virion membrane. It is found in the host membrane. The protein localises to the host Golgi apparatus. The protein resides in the host trans-Golgi network. Its function is as follows. Envelope glycoprotein necessary for proper maturation of gM and modulation of its membrane fusion activity. Also plays a critical role in virion morphogenesis. The protein is Envelope glycoprotein N of Psittacid herpesvirus 1 (isolate Amazon parrot/-/97-0001/1997) (PsHV-1).